A 153-amino-acid polypeptide reads, in one-letter code: Transcription antitermination protein NusB (153 aa).

It belongs to the NusB family.

Involved in transcription antitermination. Required for transcription of ribosomal RNA (rRNA) genes. Binds specifically to the boxA antiterminator sequence of the ribosomal RNA (rrn) operons. The chain is Transcription antitermination protein NusB from Fusobacterium nucleatum subsp. nucleatum (strain ATCC 25586 / DSM 15643 / BCRC 10681 / CIP 101130 / JCM 8532 / KCTC 2640 / LMG 13131 / VPI 4355).